Here is a 106-residue protein sequence, read N- to C-terminus: Small ribosomal subunit protein uS10 (106 aa).

This sequence belongs to the universal ribosomal protein uS10 family. Part of the 30S ribosomal subunit.

Functionally, involved in the binding of tRNA to the ribosomes. The polypeptide is Small ribosomal subunit protein uS10 (Wolbachia sp. subsp. Drosophila simulans (strain wRi)).